Reading from the N-terminus, the 513-residue chain is Glutamyl-tRNA(Gln) amidotransferase subunit B, mitochondrial (513 aa).

Belongs to the GatB/GatE family. GatB subfamily. As to quaternary structure, subunit of the heterotrimeric GatFAB amidotransferase (AdT) complex, composed of A, B and F subunits.

The protein localises to the mitochondrion. It carries out the reaction L-glutamyl-tRNA(Gln) + L-glutamine + ATP + H2O = L-glutaminyl-tRNA(Gln) + L-glutamate + ADP + phosphate + H(+). In terms of biological role, allows the formation of correctly charged Gln-tRNA(Gln) through the transamidation of misacylated Glu-tRNA(Gln) in the mitochondria. The reaction takes place in the presence of glutamine and ATP through an activated gamma-phospho-Glu-tRNA(Gln). This Debaryomyces hansenii (strain ATCC 36239 / CBS 767 / BCRC 21394 / JCM 1990 / NBRC 0083 / IGC 2968) (Yeast) protein is Glutamyl-tRNA(Gln) amidotransferase subunit B, mitochondrial.